A 136-amino-acid chain; its full sequence is Glutamyl-tRNA(Gln) amidotransferase subunit C, mitochondrial (136 aa).

The protein belongs to the GatC family. Subunit of the heterotrimeric GatCAB amidotransferase (AdT) complex, composed of A (QRSL1), B (GATB) and C (GATC) subunits.

It is found in the mitochondrion. It carries out the reaction L-glutamyl-tRNA(Gln) + L-glutamine + ATP + H2O = L-glutaminyl-tRNA(Gln) + L-glutamate + ADP + phosphate + H(+). Allows the formation of correctly charged Gln-tRNA(Gln) through the transamidation of misacylated Glu-tRNA(Gln) in the mitochondria. The reaction takes place in the presence of glutamine and ATP through an activated gamma-phospho-Glu-tRNA(Gln). This is Glutamyl-tRNA(Gln) amidotransferase subunit C, mitochondrial from Homo sapiens (Human).